A 333-amino-acid chain; its full sequence is Phosphate acyltransferase (333 aa).

This sequence belongs to the PlsX family. As to quaternary structure, homodimer. Probably interacts with PlsY.

It is found in the cytoplasm. The enzyme catalyses a fatty acyl-[ACP] + phosphate = an acyl phosphate + holo-[ACP]. Its pathway is lipid metabolism; phospholipid metabolism. In terms of biological role, catalyzes the reversible formation of acyl-phosphate (acyl-PO(4)) from acyl-[acyl-carrier-protein] (acyl-ACP). This enzyme utilizes acyl-ACP as fatty acyl donor, but not acyl-CoA. The polypeptide is Phosphate acyltransferase (Clostridium beijerinckii (strain ATCC 51743 / NCIMB 8052) (Clostridium acetobutylicum)).